The chain runs to 336 residues: Vacuolar protein sorting-associated protein 26B (336 aa).

Phosphoserine is present on residues Ser302, Ser304, and Ser319.

It belongs to the VPS26 family. In terms of assembly, component of the heterotrimeric retromer cargo-selective complex (CSC), also described as vacuolar protein sorting VPS subcomplex (VPS,) formed by VPS26 (VPS26A or VPS26B), VPS29 and VPS35. The CSC has a highly elongated structure with VPS26 and VPS29 binding independently at opposite distal ends of VPS35 as central platform. The CSC is believed to associate with variable sorting nexins to form functionally distinct retromer complex variants. The originally described retromer complex (also called SNX-BAR retromer) is a pentamer containing the CSC and a heterodimeric membrane-deforming subcomplex formed between SNX1 or SNX2 and SNX5 or SNX6 (also called SNX-BAR subcomplex); the respective CSC and SNX-BAR subcomplexes associate with low affinity. The CSC associates with SNX3 to form a SNX3-retromer complex. The CSC associates with SNX27, the WASH complex and the SNX-BAR subcomplex to form the SNX27-retromer complex. Interacts with VPS29, VPS35, TBC1D5, GOLPH3, SNX27.

The protein localises to the cytoplasm. It localises to the membrane. Its subcellular location is the early endosome. The protein resides in the late endosome. Its function is as follows. Acts as a component of the retromer cargo-selective complex (CSC). The CSC is believed to be the core functional component of retromer or respective retromer complex variants acting to prevent missorting of selected transmembrane cargo proteins into the lysosomal degradation pathway. The recruitment of the CSC to the endosomal membrane involves RAB7A and SNX3. The SNX-BAR retromer mediates retrograde transport of cargo proteins from endosomes to the trans-Golgi network (TGN) and is involved in endosome-to-plasma membrane transport for cargo protein recycling. The SNX3-retromer mediates the retrograde transport of WLS distinct from the SNX-BAR retromer pathway. The SNX27-retromer is believed to be involved in endosome-to-plasma membrane trafficking and recycling of a broad spectrum of cargo proteins. The CSC seems to act as recruitment hub for other proteins, such as the WASH complex and TBC1D5. May be involved in retrograde transport of SORT1 but not of IGF2R. Acts redundantly with VSP26A in SNX-27 mediated endocytic recycling of SLC2A1/GLUT1. This chain is Vacuolar protein sorting-associated protein 26B (VPS26B), found in Homo sapiens (Human).